A 161-amino-acid chain; its full sequence is Allophycocyanin beta chain (161 aa).

N4-methylasparagine is present on asparagine 71. Residue cysteine 81 participates in (2R,3E)-phycocyanobilin binding.

This sequence belongs to the phycobiliprotein family. As to quaternary structure, heterodimer of an alpha and a beta chain. In terms of processing, contains one covalently linked phycocyanobilin chromophore.

Its subcellular location is the plastid. The protein resides in the cyanelle thylakoid membrane. Functionally, light-harvesting photosynthetic bile pigment-protein from the phycobiliprotein complex. Allophycocyanin has a maximum absorption at approximately 650 nanometers. The sequence is that of Allophycocyanin beta chain (apcB) from Cyanophora paradoxa.